Consider the following 326-residue polypeptide: Olfactory receptor 11H2 (326 aa).

Topologically, residues 1-44 (MCPLTLHVTGLMNVSEPNSSFAFVNEFILQGFSCEWTIQIFLFS) are extracellular. Residues asparagine 13 and asparagine 18 are each glycosylated (N-linked (GlcNAc...) asparagine). The helical transmembrane segment at 45 to 65 (LFTTIYALTITGNGAIAFVLW) threads the bilayer. The Cytoplasmic portion of the chain corresponds to 66-72 (CDRRLHT). A helical transmembrane segment spans residues 73–93 (PMYMFLGNFSFLEIWYVSSTV). At 94–112 (PKMLVNFLSEKKNISFAGC) the chain is on the extracellular side. N-linked (GlcNAc...) asparagine glycosylation is present at asparagine 106. An intrachain disulfide couples cysteine 112 to cysteine 194. Residues 113 to 133 (FLQFYFFFSLGTSECLLLTVM) traverse the membrane as a helical segment. Topologically, residues 134–158 (AFDQYLAICRPLLYPNIMTGHLYAK) are cytoplasmic. A helical membrane pass occupies residues 159 to 179 (LVILCWVCGFLWFLIPIVLIS). Over 180-216 (QKPFCGPNIIDHVVCDPGPLFALDCVSAPRIQLFCYT) the chain is Extracellular. Residues 217-237 (LSSLVIFGNFLFIIGSYTLVL) form a helical membrane-spanning segment. Topologically, residues 238–259 (KAVLGMPSSTGRHKAFSTCGSH) are cytoplasmic. A helical membrane pass occupies residues 260–280 (LAVVSLCYSPLMVMYVSPGLG). The Extracellular portion of the chain corresponds to 281–287 (HSTGMQK). Residues 288-308 (IETLFYAMVTPLFNPLIYSLQ) form a helical membrane-spanning segment. Topologically, residues 309–326 (NKEIKAALRKVLGSSNII) are cytoplasmic.

It belongs to the G-protein coupled receptor 1 family.

It localises to the cell membrane. Functionally, odorant receptor. The polypeptide is Olfactory receptor 11H2 (OR11H2) (Homo sapiens (Human)).